The primary structure comprises 246 residues: Dolichol-phosphate mannosyltransferase subunit 1 (246 aa).

11 residues coordinate GDP-alpha-D-mannose: Pro-20, Tyr-22, Glu-24, Val-49, Asp-51, Asp-104, Ala-105, Asp-106, Arg-133, Arg-220, and Lys-226. Asp-106 is a Mg(2+) binding site. Residue Asp-106 coordinates Mn(2+).

The protein belongs to the glycosyltransferase 2 family. Component of the dolichol-phosphate mannose (DPM) synthase complex composed of DPMS1, DPMS2 and DPMS3; in the complex interacts directly with DPMS3. Mg(2+) is required as a cofactor. Mn(2+) serves as cofactor. The cofactor is Ca(2+).

It localises to the endoplasmic reticulum membrane. The catalysed reaction is a di-trans,poly-cis-dolichyl phosphate + GDP-alpha-D-mannose = a di-trans,poly-cis-dolichyl beta-D-mannosyl phosphate + GDP. The protein operates within protein modification; protein glycosylation. In terms of biological role, transfers mannose from GDP-mannose to dolichol monophosphate to form dolichol phosphate mannose (Dol-P-Man) which is the mannosyl donor in pathways leading to N-glycosylation, glycosyl phosphatidylinositol membrane anchoring, and O-mannosylation of proteins; catalytic subunit of the dolichol-phosphate mannose (DPM) synthase complex. Plays a role in plant development and physiology, sensitivity to ammonium stress and endoplasmic reticulum stress response. The chain is Dolichol-phosphate mannosyltransferase subunit 1 from Arabidopsis thaliana (Mouse-ear cress).